The sequence spans 377 residues: NIF3-like protein 1 (377 aa).

K109 bears the N6-acetyllysine mark. The tract at residues 244–377 (LLLYTGMGRL…ETDRDPLHVI (134 aa)) is mediates interaction with COPS2. Residue T255 is modified to Phosphothreonine. S259 bears the Phosphoserine mark.

The protein belongs to the GTP cyclohydrolase I type 2/NIF3 family. In terms of assembly, homodimer. Interacts with COPS2. Interacts with THOC7.

The protein localises to the cytoplasm. The protein resides in the nucleus. In terms of biological role, may function as a transcriptional corepressor through its interaction with COPS2, negatively regulating the expression of genes involved in neuronal differentiation. This is NIF3-like protein 1 from Bos taurus (Bovine).